A 342-amino-acid chain; its full sequence is Replication factor C subunit 4 (342 aa).

ATP contacts are provided by residues V24, V36, 61 to 68 (GMPGIGKT), N157, and R215.

The protein belongs to the activator 1 small subunits family. Heteropentamer of subunits rfc1, rfc2, rfc3, rfc4 and rfc5 that forms a complex (RFC) with PCNA in the presence of ATP. Two other complexes exist where rfc1 can be replaced by either ctf18 or elg1 to form the ctf18-RFC or the elg1-RFC complexes respectively.

It localises to the nucleus. Functionally, the elongation of primed DNA templates by DNA polymerase delta and epsilon requires the action of the accessory proteins PCNA and activator 1. The sequence is that of Replication factor C subunit 4 (rfc4) from Schizosaccharomyces pombe (strain 972 / ATCC 24843) (Fission yeast).